Reading from the N-terminus, the 308-residue chain is Ecto-ADP-ribosyltransferase 5 (308 aa).

A signal peptide spans 1–23; that stretch reads MILEDLLMVLSCLALHILWKVQA. Cys43 and Cys259 are disulfide-bonded. The region spanning 63-253 is the TR mART core domain; the sequence is ALLRESWEAA…IVTLWSYNQT (191 aa). Tyr100 is an NAD(+) binding site. An N-linked (GlcNAc...) asparagine glycan is attached at Asn102. NAD(+) is bound by residues Arg161 and Gln181. Arg161 is a catalytic residue. Residue Ser184 is part of the active site. A glycan (N-linked (GlcNAc...) asparagine) is linked at Asn197. Residue Ser215 participates in NAD(+) binding. Glu222 is an active-site residue. Asn251 is a glycosylation site (N-linked (GlcNAc...) asparagine).

This sequence belongs to the Arg-specific ADP-ribosyltransferase family.

The protein localises to the secreted. It is found in the membrane. The catalysed reaction is L-arginyl-[protein] + NAD(+) = N(omega)-(ADP-D-ribosyl)-L-arginyl-[protein] + nicotinamide + H(+). This is Ecto-ADP-ribosyltransferase 5 (Art5) from Rattus norvegicus (Rat).